Reading from the N-terminus, the 206-residue chain is dITP/XTP pyrophosphatase (206 aa).

Position 7 to 12 (7 to 12) interacts with substrate; sequence SRNPKK. The active-site Proton acceptor is the Asp72. Residue Asp72 coordinates Mg(2+). Residues Ser73, 155 to 158, Lys178, and 183 to 184 contribute to the substrate site; these read FGYD and HR.

It belongs to the HAM1 NTPase family. In terms of assembly, homodimer. Requires Mg(2+) as cofactor.

It carries out the reaction XTP + H2O = XMP + diphosphate + H(+). The catalysed reaction is dITP + H2O = dIMP + diphosphate + H(+). The enzyme catalyses ITP + H2O = IMP + diphosphate + H(+). In terms of biological role, pyrophosphatase that catalyzes the hydrolysis of nucleoside triphosphates to their monophosphate derivatives, with a high preference for the non-canonical purine nucleotides XTP (xanthosine triphosphate), dITP (deoxyinosine triphosphate) and ITP. Seems to function as a house-cleaning enzyme that removes non-canonical purine nucleotides from the nucleotide pool, thus preventing their incorporation into DNA/RNA and avoiding chromosomal lesions. The polypeptide is dITP/XTP pyrophosphatase (Mycobacteroides abscessus (strain ATCC 19977 / DSM 44196 / CCUG 20993 / CIP 104536 / JCM 13569 / NCTC 13031 / TMC 1543 / L948) (Mycobacterium abscessus)).